The sequence spans 691 residues: Leucine-rich repeat and WD repeat-containing protein 1 (691 aa).

LRR repeat units follow at residues 22-45 (DLKKLNLSKMHLEMKDIDPKLFSQ), 48-69 (NLDELDISHNTLSELPDNLGLH), and 70-91 (NLRILNFADNHVEDVTVLKQFP). The segment at 202–291 (GKKRDSADDC…QSNESSAKIN (90 aa)) is disordered. Composition is skewed to polar residues over residues 255-264 (TSTQGTPSKS) and 276-291 (STPSKKQSNESSAKIN). WD repeat units follow at residues 426–466 (AHKK…CDYN), 476–516 (DTTS…KQGR), 535–574 (NDFHVIDSLAFLNEDIIASKSVMQGSIYLWSWEKTLKTRK), 593–632 (SSETPYLVLSTSPERYCVFCGDEDGKIWIYDLDSCKADLQ), and 659–691 (VEKTLINVVTVDPTMEYLVALTDINIVSIWKIK).

The protein belongs to the LRWD1 family. As to quaternary structure, component of the ORC complex.

It localises to the nucleus. Its subcellular location is the chromosome. The protein localises to the centromere. The protein resides in the telomere. It is found in the cytoplasm. It localises to the cytoskeleton. Its subcellular location is the microtubule organizing center. The protein localises to the centrosome. The protein resides in the kinetochore. Required for G1/S transition. Recruits and stabilizes the origin recognition complex (ORC) onto chromatin during G1 to establish pre-replication complex (preRC) and to heterochromatic sites in post-replicated cells. Binds a combination of DNA and histone methylation repressive marks on heterochromatin. Required for silencing of major satellite repeats. May be important ORC2, ORC3 and ORC4 stability. The protein is Leucine-rich repeat and WD repeat-containing protein 1 (lrwd1) of Xenopus tropicalis (Western clawed frog).